A 202-amino-acid polypeptide reads, in one-letter code: Small ribosomal subunit protein uS4 (202 aa).

Positions 16 to 42 (GELPGLSRKNPRRAYPPGQHGQARKKR) are disordered. The region spanning 90-151 (MRLDNTVFRL…QERSRRLVEA (62 aa)) is the S4 RNA-binding domain.

The protein belongs to the universal ribosomal protein uS4 family. Part of the 30S ribosomal subunit. Contacts protein S5. The interaction surface between S4 and S5 is involved in control of translational fidelity.

Functionally, one of the primary rRNA binding proteins, it binds directly to 16S rRNA where it nucleates assembly of the body of the 30S subunit. In terms of biological role, with S5 and S12 plays an important role in translational accuracy. In Rippkaea orientalis (strain PCC 8801 / RF-1) (Cyanothece sp. (strain PCC 8801)), this protein is Small ribosomal subunit protein uS4.